Here is a 337-residue protein sequence, read N- to C-terminus: Probable cytosolic iron-sulfur protein assembly protein 1 (337 aa).

WD repeat units follow at residues 11-50 (LHND…ENLL), 57-96 (VHKK…LEEG), 109-148 (GHEN…EEYE), 155-194 (EHSQ…WECA), 199-240 (GHEG…EDDQ), 252-290 (AHRS…SEVS), and 301-337 (AHTV…NYQD).

It belongs to the WD repeat CIA1 family. As to quaternary structure, interacts with NAR1.

The protein localises to the cytoplasm. It localises to the nucleus. Its function is as follows. Essential component of the cytosolic iron-sulfur (Fe/S) protein assembly machinery. Required for the maturation of extramitochondrial Fe/S proteins. The polypeptide is Probable cytosolic iron-sulfur protein assembly protein 1 (Candida glabrata (strain ATCC 2001 / BCRC 20586 / JCM 3761 / NBRC 0622 / NRRL Y-65 / CBS 138) (Yeast)).